The chain runs to 233 residues: Phosphoribosylformylglycinamidine synthase subunit PurQ (233 aa).

Residues 3 to 233 (AAILVFPGIN…GLAQHLEKAA (231 aa)) enclose the Glutamine amidotransferase type-1 domain. Catalysis depends on cysteine 87, which acts as the Nucleophile. Catalysis depends on residues histidine 204 and glutamate 206.

Part of the FGAM synthase complex composed of 1 PurL, 1 PurQ and 2 PurS subunits.

It is found in the cytoplasm. The catalysed reaction is N(2)-formyl-N(1)-(5-phospho-beta-D-ribosyl)glycinamide + L-glutamine + ATP + H2O = 2-formamido-N(1)-(5-O-phospho-beta-D-ribosyl)acetamidine + L-glutamate + ADP + phosphate + H(+). The enzyme catalyses L-glutamine + H2O = L-glutamate + NH4(+). The protein operates within purine metabolism; IMP biosynthesis via de novo pathway; 5-amino-1-(5-phospho-D-ribosyl)imidazole from N(2)-formyl-N(1)-(5-phospho-D-ribosyl)glycinamide: step 1/2. Its function is as follows. Part of the phosphoribosylformylglycinamidine synthase complex involved in the purines biosynthetic pathway. Catalyzes the ATP-dependent conversion of formylglycinamide ribonucleotide (FGAR) and glutamine to yield formylglycinamidine ribonucleotide (FGAM) and glutamate. The FGAM synthase complex is composed of three subunits. PurQ produces an ammonia molecule by converting glutamine to glutamate. PurL transfers the ammonia molecule to FGAR to form FGAM in an ATP-dependent manner. PurS interacts with PurQ and PurL and is thought to assist in the transfer of the ammonia molecule from PurQ to PurL. The protein is Phosphoribosylformylglycinamidine synthase subunit PurQ of Bradyrhizobium diazoefficiens (strain JCM 10833 / BCRC 13528 / IAM 13628 / NBRC 14792 / USDA 110).